The primary structure comprises 380 residues: Succinyl-diaminopimelate desuccinylase (380 aa).

H70 lines the Zn(2+) pocket. D72 is an active-site residue. D103 serves as a coordination point for Zn(2+). Catalysis depends on E137, which acts as the Proton acceptor. Positions 138, 166, and 352 each coordinate Zn(2+).

Belongs to the peptidase M20A family. DapE subfamily. In terms of assembly, homodimer. Requires Zn(2+) as cofactor. Co(2+) is required as a cofactor.

The enzyme catalyses N-succinyl-(2S,6S)-2,6-diaminopimelate + H2O = (2S,6S)-2,6-diaminopimelate + succinate. It participates in amino-acid biosynthesis; L-lysine biosynthesis via DAP pathway; LL-2,6-diaminopimelate from (S)-tetrahydrodipicolinate (succinylase route): step 3/3. Functionally, catalyzes the hydrolysis of N-succinyl-L,L-diaminopimelic acid (SDAP), forming succinate and LL-2,6-diaminopimelate (DAP), an intermediate involved in the bacterial biosynthesis of lysine and meso-diaminopimelic acid, an essential component of bacterial cell walls. The polypeptide is Succinyl-diaminopimelate desuccinylase (Azoarcus sp. (strain BH72)).